A 391-amino-acid polypeptide reads, in one-letter code: Succinate--CoA ligase [ADP-forming] subunit beta (391 aa).

The region spanning 9 to 246 (KHLFTEAGIA…LTQEDETEVR (238 aa)) is the ATP-grasp domain. ATP-binding positions include lysine 46, 53–55 (GRG), glutamate 99, leucine 102, and glutamate 107. Residues asparagine 199 and aspartate 213 each coordinate Mg(2+). Residues asparagine 266 and 323–325 (GIV) each bind substrate.

Belongs to the succinate/malate CoA ligase beta subunit family. Heterotetramer of two alpha and two beta subunits. Mg(2+) serves as cofactor.

It carries out the reaction succinate + ATP + CoA = succinyl-CoA + ADP + phosphate. The enzyme catalyses GTP + succinate + CoA = succinyl-CoA + GDP + phosphate. The protein operates within carbohydrate metabolism; tricarboxylic acid cycle; succinate from succinyl-CoA (ligase route): step 1/1. In terms of biological role, succinyl-CoA synthetase functions in the citric acid cycle (TCA), coupling the hydrolysis of succinyl-CoA to the synthesis of either ATP or GTP and thus represents the only step of substrate-level phosphorylation in the TCA. The beta subunit provides nucleotide specificity of the enzyme and binds the substrate succinate, while the binding sites for coenzyme A and phosphate are found in the alpha subunit. The polypeptide is Succinate--CoA ligase [ADP-forming] subunit beta (Halorhodospira halophila (strain DSM 244 / SL1) (Ectothiorhodospira halophila (strain DSM 244 / SL1))).